The sequence spans 248 residues: PF03932 family protein CutC (248 aa).

Belongs to the CutC family. Homodimer.

The protein resides in the cytoplasm. The sequence is that of PF03932 family protein CutC from Escherichia coli O9:H4 (strain HS).